Consider the following 166-residue polypeptide: Phospholipase A2 myotoxin inhibitor protein (166 aa).

Residues 1 to 19 form the signal peptide; that stretch reads MRLILLSGLLLLGTFLANG. The C-type lectin domain occupies 46-161; it reads LKYAFLTVHK…CDDNLLVVCE (116 aa). Disulfide bonds link cysteine 83–cysteine 160 and cysteine 138–cysteine 152. Asparagine 122 carries an N-linked (GlcNAc...) asparagine glycan.

This sequence belongs to the alpha-type phospholipase A2 inhibitor family. In terms of assembly, oligomer. Homotrimer; non-covalently linked. Glycosylated. The glycosylation has no role in the association of this PLI and PA2 enzyme. Expressed by the liver.

It localises to the secreted. Its function is as follows. This phospholipase A2 inhibitor binds directly phospholipase A2 in the presence or absence of calcium. Has anti-enzymatic, anti-myotoxic, anti-edema inducing, anti-cytotoxic, anti-bactericidal, and anti-lethal properties against basic and acidic phospholipases A2 from Bothrops venoms. This chain is Phospholipase A2 myotoxin inhibitor protein, found in Bothrops moojeni (Lance-headed viper).